The primary structure comprises 165 residues: MAAAATSKITLTSSDGVDITIDRQVAERSILIKNMLKDLGDSGEAIPIPNVNESVLKKVIEWCKHHKGDPPSTGDDDVDSRRKTTDIDEWDQKFMQVDQEMLFEIILAANYLDIKALLDVGCKTVANMIKGKSPEEIRKTFNIQNDFTPEEEDQIRRENEWAEDR.

The interval 106–165 is interaction with the F-box domain of F-box proteins; the sequence is ILAANYLDIKALLDVGCKTVANMIKGKSPEEIRKTFNIQNDFTPEEEDQIRRENEWAEDR.

Belongs to the SKP1 family. Component of the SCF (SKP1-CUL1-F-box protein) E3 ubiquitin ligase complexes.

It participates in protein modification; protein ubiquitination. In terms of biological role, essential component of the SCF (SKP1-CUL1-F-box protein) E3 ubiquitin ligase complexes, which mediate the ubiquitination and subsequent proteasomal degradation of target proteins. Controls sulfur metabolite repression, probably by mediating the inactivation or degradation of the metR transcription factor. The polypeptide is E3 ubiquitin ligase complex SCF subunit sconC (sconC) (Arthroderma otae (Microsporum canis)).